Consider the following 697-residue polypeptide: Elongation factor G 2 (697 aa).

Positions 5–280 constitute a tr-type G domain; sequence SKYRNIGIFA…AVVDYLPAPD (276 aa). GTP-binding positions include 14-21, 78-82, and 132-135; these read AHVDAGKT, DTPGH, and NKLD.

Belongs to the TRAFAC class translation factor GTPase superfamily. Classic translation factor GTPase family. EF-G/EF-2 subfamily.

Its subcellular location is the cytoplasm. Functionally, catalyzes the GTP-dependent ribosomal translocation step during translation elongation. During this step, the ribosome changes from the pre-translocational (PRE) to the post-translocational (POST) state as the newly formed A-site-bound peptidyl-tRNA and P-site-bound deacylated tRNA move to the P and E sites, respectively. Catalyzes the coordinated movement of the two tRNA molecules, the mRNA and conformational changes in the ribosome. The protein is Elongation factor G 2 of Shewanella sp. (strain MR-7).